The primary structure comprises 327 residues: GMP reductase (327 aa).

The active-site Thioimidate intermediate is C176. I205–V228 contacts NADP(+).

This sequence belongs to the IMPDH/GMPR family. GuaC type 2 subfamily.

The catalysed reaction is IMP + NH4(+) + NADP(+) = GMP + NADPH + 2 H(+). In terms of biological role, catalyzes the irreversible NADPH-dependent deamination of GMP to IMP. It functions in the conversion of nucleobase, nucleoside and nucleotide derivatives of G to A nucleotides, and in maintaining the intracellular balance of A and G nucleotides. This chain is GMP reductase, found in Streptococcus agalactiae serotype III (strain NEM316).